A 203-amino-acid chain; its full sequence is NADH-quinone oxidoreductase subunit C (203 aa).

It belongs to the complex I 30 kDa subunit family. In terms of assembly, NDH-1 is composed of 14 different subunits. Subunits NuoB, C, D, E, F, and G constitute the peripheral sector of the complex.

Its subcellular location is the cell inner membrane. It catalyses the reaction a quinone + NADH + 5 H(+)(in) = a quinol + NAD(+) + 4 H(+)(out). NDH-1 shuttles electrons from NADH, via FMN and iron-sulfur (Fe-S) centers, to quinones in the respiratory chain. The immediate electron acceptor for the enzyme in this species is believed to be ubiquinone. Couples the redox reaction to proton translocation (for every two electrons transferred, four hydrogen ions are translocated across the cytoplasmic membrane), and thus conserves the redox energy in a proton gradient. The chain is NADH-quinone oxidoreductase subunit C from Methylibium petroleiphilum (strain ATCC BAA-1232 / LMG 22953 / PM1).